A 324-amino-acid polypeptide reads, in one-letter code: Hairy/enhancer-of-split related with YRPW motif protein 2 (324 aa).

The interval Met-1 to Phe-34 is disordered. A compositionally biased stretch (acidic residues) spans Ser-8 to Ile-18. Residues Ser-22–Phe-34 show a composition bias toward polar residues. The 56-residue stretch at Ala-48–Leu-103 folds into the bHLH domain. In terms of domain architecture, Orange spans Leu-122–Leu-157. The span at Ser-294–Ser-311 shows a compositional bias: low complexity. Residues Ser-294–Phe-324 are disordered. Residues Tyr-314 to Trp-317 carry the YRPW motif motif.

It belongs to the HEY family.

The protein localises to the nucleus. Functionally, transcriptional repressor. Downstream effector of Notch signaling which regulates cell fate choice in angioblasts. Represses the venous cell fate, thereby promoting the arterial cell fate and aorta formation. This Danio rerio (Zebrafish) protein is Hairy/enhancer-of-split related with YRPW motif protein 2 (hey2).